The chain runs to 253 residues: HTH-type transcriptional regulator AdiY (253 aa).

Positions 149–246 (DSVYQIIESD…GMTPLHYVSQ (98 aa)) constitute an HTH araC/xylS-type domain. 2 DNA-binding regions (H-T-H motif) span residues 166 to 187 (SMVA…KSEN) and 213 to 236 (ISQV…KDFY).

This Escherichia coli (strain K12) protein is HTH-type transcriptional regulator AdiY (adiY).